Consider the following 271-residue polypeptide: Inactive phospholipid phosphatase 7 (271 aa).

The segment at 1–66 (MPASQSRARA…RERRQSQQLP (66 aa)) is disordered. Residues 1–112 (MPASQSRARA…AASWASARSM (112 aa)) lie on the Cytoplasmic side of the membrane. Ser43 and Ser62 each carry phosphoserine. Residues 70-91 (CMQLNPSFKGIAFNSLLAIDIC) form an interaction with MTOR region. A helical membrane pass occupies residues 113 to 133 (VKLIGITGHGIPWIGGTILCL). Residues 134 to 141 (VKSSTLAG) are Extracellular-facing. A helical membrane pass occupies residues 142–162 (QEVLMNLLLALLLDIMTVAGV). Over 163–202 (QKLIKRRGPYETSPSLLDYLTMDIYAFPAGHASRAAMVSK) the chain is Cytoplasmic. A helical transmembrane segment spans residues 203 to 223 (FFLSHLVLAVPLRVLLVLWAL). Residues 224–239 (CVGLSRVMIGRHHVTD) are Extracellular-facing. A helical membrane pass occupies residues 240 to 260 (VLSGFVIGYLQFRLVELVWMP). Residues 261–271 (SSTCQMLISAW) lie on the Cytoplasmic side of the membrane.

It belongs to the PA-phosphatase related phosphoesterase family. As to quaternary structure, homo and heterooligomer. Interacts with MTOR; controls MTOR-dependent IGF2 expression during myoblast differentiation.

The protein resides in the nucleus envelope. It is found in the endoplasmic reticulum membrane. It localises to the membrane. In terms of biological role, plays a role as negative regulator of myoblast differentiation, in part through effects on MTOR signaling. Has no detectable enzymatic activity. This chain is Inactive phospholipid phosphatase 7, found in Homo sapiens (Human).